We begin with the raw amino-acid sequence, 562 residues long: Urocanate hydratase (562 aa).

Residues 52–53 (GG), Q130, 176–178 (GMG), E196, R201, 242–243 (NA), 263–267 (QTSAH), 273–274 (YL), and Y322 contribute to the NAD(+) site. The active site involves C410. Residue G492 coordinates NAD(+).

The protein belongs to the urocanase family. The cofactor is NAD(+).

It is found in the cytoplasm. It carries out the reaction 4-imidazolone-5-propanoate = trans-urocanate + H2O. It functions in the pathway amino-acid degradation; L-histidine degradation into L-glutamate; N-formimidoyl-L-glutamate from L-histidine: step 2/3. In terms of biological role, catalyzes the conversion of urocanate to 4-imidazolone-5-propionate. This Klebsiella pneumoniae (strain 342) protein is Urocanate hydratase.